Reading from the N-terminus, the 513-residue chain is ATP synthase subunit alpha (513 aa).

169–176 (GDRQTGKT) provides a ligand contact to ATP.

Belongs to the ATPase alpha/beta chains family. As to quaternary structure, F-type ATPases have 2 components, CF(1) - the catalytic core - and CF(0) - the membrane proton channel. CF(1) has five subunits: alpha(3), beta(3), gamma(1), delta(1), epsilon(1). CF(0) has three main subunits: a(1), b(2) and c(9-12). The alpha and beta chains form an alternating ring which encloses part of the gamma chain. CF(1) is attached to CF(0) by a central stalk formed by the gamma and epsilon chains, while a peripheral stalk is formed by the delta and b chains.

Its subcellular location is the cell inner membrane. The enzyme catalyses ATP + H2O + 4 H(+)(in) = ADP + phosphate + 5 H(+)(out). Its function is as follows. Produces ATP from ADP in the presence of a proton gradient across the membrane. The alpha chain is a regulatory subunit. This is ATP synthase subunit alpha from Klebsiella pneumoniae subsp. pneumoniae (strain ATCC 700721 / MGH 78578).